A 442-amino-acid chain; its full sequence is tRNA modification GTPase MnmE (442 aa).

(6S)-5-formyl-5,6,7,8-tetrahydrofolate is bound by residues Arg22, Glu79, and Lys119. Residues 216 to 366 form the TrmE-type G domain; it reads GIKTCLVGAP…LLEKIKSIFA (151 aa). Asn226 is a binding site for K(+). Residues 226–231, 245–251, and 270–273 contribute to the GTP site; these read NSGKSS, SEIPGTT, and DTAG. Ser230 lines the Mg(2+) pocket. K(+) is bound by residues Ser245, Ile247, and Thr250. Position 251 (Thr251) interacts with Mg(2+). Lys442 serves as a coordination point for (6S)-5-formyl-5,6,7,8-tetrahydrofolate.

This sequence belongs to the TRAFAC class TrmE-Era-EngA-EngB-Septin-like GTPase superfamily. TrmE GTPase family. In terms of assembly, homodimer. Heterotetramer of two MnmE and two MnmG subunits. Requires K(+) as cofactor.

The protein resides in the cytoplasm. In terms of biological role, exhibits a very high intrinsic GTPase hydrolysis rate. Involved in the addition of a carboxymethylaminomethyl (cmnm) group at the wobble position (U34) of certain tRNAs, forming tRNA-cmnm(5)s(2)U34. This is tRNA modification GTPase MnmE from Mesomycoplasma hyopneumoniae (strain 232) (Mycoplasma hyopneumoniae).